The primary structure comprises 172 residues: Translation initiation factor IF-3 (172 aa).

This sequence belongs to the IF-3 family. Monomer.

The protein localises to the cytoplasm. IF-3 binds to the 30S ribosomal subunit and shifts the equilibrium between 70S ribosomes and their 50S and 30S subunits in favor of the free subunits, thus enhancing the availability of 30S subunits on which protein synthesis initiation begins. The polypeptide is Translation initiation factor IF-3 (Bartonella henselae (strain ATCC 49882 / DSM 28221 / CCUG 30454 / Houston 1) (Rochalimaea henselae)).